Consider the following 413-residue polypeptide: Multifunctional CCA protein (413 aa).

Residues glycine 8 and arginine 11 each contribute to the ATP site. Residues glycine 8 and arginine 11 each coordinate CTP. Residues glutamate 21 and aspartate 23 each contribute to the Mg(2+) site. Arginine 91, arginine 137, and arginine 140 together coordinate ATP. CTP-binding residues include arginine 91, arginine 137, and arginine 140. An HD domain is found at 228 to 329 (CGIHTLMSLR…WRLLQRLDVL (102 aa)).

Belongs to the tRNA nucleotidyltransferase/poly(A) polymerase family. Bacterial CCA-adding enzyme type 1 subfamily. Monomer. Can also form homodimers and oligomers. The cofactor is Mg(2+). Requires Ni(2+) as cofactor.

The catalysed reaction is a tRNA precursor + 2 CTP + ATP = a tRNA with a 3' CCA end + 3 diphosphate. It carries out the reaction a tRNA with a 3' CCA end + 2 CTP + ATP = a tRNA with a 3' CCACCA end + 3 diphosphate. In terms of biological role, catalyzes the addition and repair of the essential 3'-terminal CCA sequence in tRNAs without using a nucleic acid template. Adds these three nucleotides in the order of C, C, and A to the tRNA nucleotide-73, using CTP and ATP as substrates and producing inorganic pyrophosphate. tRNA 3'-terminal CCA addition is required both for tRNA processing and repair. Also involved in tRNA surveillance by mediating tandem CCA addition to generate a CCACCA at the 3' terminus of unstable tRNAs. While stable tRNAs receive only 3'-terminal CCA, unstable tRNAs are marked with CCACCA and rapidly degraded. The sequence is that of Multifunctional CCA protein from Acinetobacter baylyi (strain ATCC 33305 / BD413 / ADP1).